Consider the following 346-residue polypeptide: Formimidoylglutamase (346 aa).

H145, D180, H182, D184, D271, and D273 together coordinate Mn(2+).

This sequence belongs to the arginase family. Requires Mn(2+) as cofactor.

It catalyses the reaction N-formimidoyl-L-glutamate + H2O = formamide + L-glutamate. The protein operates within amino-acid degradation; L-histidine degradation into L-glutamate; L-glutamate from N-formimidoyl-L-glutamate (hydrolase route): step 1/1. Its function is as follows. Catalyzes the conversion of N-formimidoyl-L-glutamate to L-glutamate and formamide. The sequence is that of Formimidoylglutamase from Psychrobacter cryohalolentis (strain ATCC BAA-1226 / DSM 17306 / VKM B-2378 / K5).